A 181-amino-acid polypeptide reads, in one-letter code: Histone H1 (181 aa).

Disordered stretches follow at residues 1–23 (MTET…THPP) and 81–181 (TKGA…PKKK). The segment covering 8-19 (KPKKVSKPKAKP) has biased composition (basic residues). Residues 20-94 (THPPTSVMVM…GASGSFKLAA (75 aa)) enclose the H15 domain. Composition is skewed to basic residues over residues 103-119 (AVAK…KAAA) and 145-181 (KPKK…PKKK).

Belongs to the histone H1/H5 family.

It localises to the nucleus. The protein localises to the chromosome. Histones H1 are necessary for the condensation of nucleosome chains into higher-order structures. In Tigriopus californicus (Marine copepod), this protein is Histone H1.